A 174-amino-acid polypeptide reads, in one-letter code: Co-chaperone protein HscB homolog (174 aa).

Positions 2 to 74 (NYFELFSLLP…IQRAEHLLAL (73 aa)) constitute a J domain.

This sequence belongs to the HscB family. As to quaternary structure, interacts with HscA and stimulates its ATPase activity.

Co-chaperone involved in the maturation of iron-sulfur cluster-containing proteins. Seems to help targeting proteins to be folded toward HscA. The sequence is that of Co-chaperone protein HscB homolog from Shewanella pealeana (strain ATCC 700345 / ANG-SQ1).